A 226-amino-acid chain; its full sequence is Enolase-phosphatase E1 (226 aa).

Belongs to the HAD-like hydrolase superfamily. MasA/MtnC family. In terms of assembly, monomer. Mg(2+) is required as a cofactor.

The catalysed reaction is 5-methylsulfanyl-2,3-dioxopentyl phosphate + H2O = 1,2-dihydroxy-5-(methylsulfanyl)pent-1-en-3-one + phosphate. Its pathway is amino-acid biosynthesis; L-methionine biosynthesis via salvage pathway; L-methionine from S-methyl-5-thio-alpha-D-ribose 1-phosphate: step 3/6. It functions in the pathway amino-acid biosynthesis; L-methionine biosynthesis via salvage pathway; L-methionine from S-methyl-5-thio-alpha-D-ribose 1-phosphate: step 4/6. Its function is as follows. Bifunctional enzyme that catalyzes the enolization of 2,3-diketo-5-methylthiopentyl-1-phosphate (DK-MTP-1-P) into the intermediate 2-hydroxy-3-keto-5-methylthiopentenyl-1-phosphate (HK-MTPenyl-1-P), which is then dephosphorylated to form the acireductone 1,2-dihydroxy-3-keto-5-methylthiopentene (DHK-MTPene). In Shewanella baltica (strain OS155 / ATCC BAA-1091), this protein is Enolase-phosphatase E1.